Consider the following 173-residue polypeptide: Alpha-crystallin A chain (173 aa).

The residue at position 1 (Met-1) is an N-acetylmethionine. The interval 1–63 (MDVTIQHPWF…RTVLDSGVSE (63 aa)) is required for complex formation with BFSP1 and BFSP2. Residue Gln-6 is modified to Deamidated glutamine; partial. Position 45 is a phosphoserine (Ser-45). At Gln-50 the chain carries Deamidated glutamine; partial. The sHSP domain occupies 52–162 (LFRTVLDSGV…GHSERAIPVS (111 aa)). Lys-70 carries the post-translational modification N6-acetyllysine. Position 90 is a deamidated glutamine; partial (Gln-90). Position 99 is an N6-acetyllysine (Lys-99). His-100 is a Zn(2+) binding site. At Asn-101 the chain carries Deamidated asparagine; partial. Residues Glu-102 and His-107 each contribute to the Zn(2+) site. Ser-122 is subject to Phosphoserine. At Asn-123 the chain carries Deamidated asparagine; partial. The tract at residues 144–173 (PKVQSGLDAGHSERAIPVSREEKPSSAPSS) is disordered. Gln-147 is modified (deamidated glutamine; partial). A compositionally biased stretch (basic and acidic residues) spans 153-167 (GHSERAIPVSREEKP). Residue His-154 coordinates Zn(2+). O-linked (GlcNAc) serine glycosylation occurs at Ser-162.

Belongs to the small heat shock protein (HSP20) family. As to quaternary structure, heteromer composed of three CRYAA and one CRYAB subunits. Inter-subunit bridging via zinc ions enhances stability, which is crucial as there is no protein turn over in the lens. Can also form homodimers and homotetramers (dimers of dimers) which serve as the building blocks of homooligomers. Within homooligomers, the zinc-binding motif is created from residues of 3 different molecules. His-100 and Glu-102 from one molecule are ligands of the zinc ion, and His-107 and His-154 residues from additional molecules complete the site with tetrahedral coordination geometry. Part of a complex required for lens intermediate filament formation composed of BFSP1, BFSP2 and CRYAA. Post-translationally, acetylation at Lys-70 may increase chaperone activity. Undergoes age-dependent proteolytical cleavage at the C-terminus.

The protein localises to the cytoplasm. It localises to the nucleus. Functionally, contributes to the transparency and refractive index of the lens. Acts as a chaperone, preventing aggregation of various proteins under a wide range of stress conditions. Required for the correct formation of lens intermediate filaments as part of a complex composed of BFSP1, BFSP2 and CRYAA. The polypeptide is Alpha-crystallin A chain (CRYAA) (Otolemur crassicaudatus (Brown greater galago)).